The following is a 530-amino-acid chain: MEEDSLYLGGEWQFNHFSKLTSSRPDAAFAEIQRTSLPEKSPLSCETRVDLCDDLAPVARQLAPREKLPLSSRRPAAVGAGLQNMGNTCYVNASLQCLTYTPPLANYMLSREHSQTCHRHKGCMLCTMQAHITRALHNPGHVIQPSQALAAGFHRGKQEDAHEFLMFTVDAMKKACLPGHKQVDHHSKDTTLIHQIFGGYWRSQIKCLHCHGISDTFDPYLDIALDIQAAQSVQQALEQLVKPEELNGENAYHCGVCLQRAPASKTLTLHTSAKVLILVLKRFSDVTGNKIAKNVQYPECLDMQPYMSQTNTGPLVYVLYAVLVHAGWSCHNGHYFSYVKAQEGQWYKMDDAEVTASSITSVLSQQAYVLFYIQKSEWERHSESVSRGREPRALGAEDTDRRATQGELKRDHPCLQAPELDEHLVERATQESTLDHWKFLQEQNKTKPEFNVRKVEGTLPPDVLVIHQSKYKCGMKNHHPEQQSSLLKLSSTTPTHQESMNTGTLASLRGRARRSKGKNKHSKRALLVCQ.

A USP domain is found at A80 to K375. C89 (nucleophile) is an active-site residue. H334 acts as the Proton acceptor in catalysis. 2 stretches are compositionally biased toward basic and acidic residues: residues S382–R392 and D398–P413. Disordered stretches follow at residues S382 to P413 and K476 to Q530. A compositionally biased stretch (low complexity) spans S484–T495. The segment covering H496–L505 has biased composition (polar residues). Residues G510–R524 show a composition bias toward basic residues.

Belongs to the peptidase C19 family. USP17 subfamily.

Its subcellular location is the nucleus. The protein resides in the endoplasmic reticulum. The catalysed reaction is Thiol-dependent hydrolysis of ester, thioester, amide, peptide and isopeptide bonds formed by the C-terminal Gly of ubiquitin (a 76-residue protein attached to proteins as an intracellular targeting signal).. Deubiquitinating enzyme that removes conjugated ubiquitin from specific proteins to regulate different cellular processes that may include cell proliferation, progression through the cell cycle, apoptosis, cell migration, and the cellular response to viral infection. The polypeptide is Ubiquitin carboxyl-terminal hydrolase 17-like protein 19 (USP17L19) (Homo sapiens (Human)).